The chain runs to 104 residues: A-type ATP synthase subunit F (104 aa).

It belongs to the V-ATPase F subunit family. Has multiple subunits with at least A(3), B(3), C, D, E, F, H, I and proteolipid K(x).

The protein localises to the cell membrane. Its function is as follows. Component of the A-type ATP synthase that produces ATP from ADP in the presence of a proton gradient across the membrane. The protein is A-type ATP synthase subunit F of Thermoplasma volcanium (strain ATCC 51530 / DSM 4299 / JCM 9571 / NBRC 15438 / GSS1).